The following is an 87-amino-acid chain: MKPGIHPDYRPVLFHDTSADVFFLIGSTAETDKTHTHTDGKTYPYVTLDVSSASHPVYTGEQRKTKSEGRVAGFNKRFAGFVGGKGA.

It belongs to the bacterial ribosomal protein bL31 family. Type B subfamily. In terms of assembly, part of the 50S ribosomal subunit.

In Pseudomonas paraeruginosa (strain DSM 24068 / PA7) (Pseudomonas aeruginosa (strain PA7)), this protein is Large ribosomal subunit protein bL31B.